The primary structure comprises 318 residues: MTRHIILDCDPGHDDAIALILALAHPDLVPLAVTTSAGNQTPDKTLNNALRILTLLNRGDIPVAGGATKPLTRELIIADNVHGETGLDGPALPEPSFSPQAITAVELMAQQIRQSTQPVTLVPTGPLTNIALLLASHSELHPKIERIVLMGGAAGVGNWTPAAEFNIFVDPEAADIVFKSGIPITMCGLDVTHQAQIMDEDIERIRAIPNPIAQCVAELLDFFMIYHRDPKWGFIGAPLHDPCTIAWLLKPELFEAQDCWVGIETQSELTLGMTVVDRYQLTGKTANATVLFGLDRLGFVDLLVDSLRVYDPTYLNRR.

The active site involves histidine 240.

This sequence belongs to the IUNH family. RihA subfamily.

Functionally, hydrolyzes cytidine or uridine to ribose and cytosine or uracil, respectively. The chain is Pyrimidine-specific ribonucleoside hydrolase RihA from Shewanella baltica (strain OS155 / ATCC BAA-1091).